The chain runs to 158 residues: Small ribosomal subunit protein uS15 (158 aa).

Over residues 1-18 the composition is skewed to basic residues; that stretch reads MARMHARKRGKSGSKRPP. The disordered stretch occupies residues 1 to 21; sequence MARMHARKRGKSGSKRPPRTA.

Belongs to the universal ribosomal protein uS15 family. As to quaternary structure, part of the 30S ribosomal subunit.

This chain is Small ribosomal subunit protein uS15, found in Pyrococcus horikoshii (strain ATCC 700860 / DSM 12428 / JCM 9974 / NBRC 100139 / OT-3).